The chain runs to 473 residues: GTPase Der (473 aa).

2 consecutive EngA-type G domains span residues 3–167 (FTVA…GKDR) and 203–378 (LRVA…RVWN). GTP-binding positions include 9-16 (GRPNVGKS), 56-60 (DTAGL), 119-122 (NKSE), 209-216 (GRPNAGKS), 256-260 (DTAGM), and 321-324 (NKWD). The 85-residue stretch at 379–463 (KRISTARLNR…PIRIHFRSAE (85 aa)) folds into the KH-like domain.

It belongs to the TRAFAC class TrmE-Era-EngA-EngB-Septin-like GTPase superfamily. EngA (Der) GTPase family. Associates with the 50S ribosomal subunit.

Its function is as follows. GTPase that plays an essential role in the late steps of ribosome biogenesis. The polypeptide is GTPase Der (Rhizobium etli (strain CIAT 652)).